Consider the following 147-residue polypeptide: UPF0306 protein YpAngola_A4021 (147 aa).

It belongs to the UPF0306 family.

The sequence is that of UPF0306 protein YpAngola_A4021 from Yersinia pestis bv. Antiqua (strain Angola).